The following is a 224-amino-acid chain: uncharacterized protein (224 aa).

A run of 6 helical transmembrane segments spans residues 25-45, 54-74, 91-111, 119-139, 142-162, and 174-194; these read MMLA…IPFF, ISVV…SLTI, IGVL…RLYF, FCWI…LTTL, ILIT…NFLI, and HFFF…YSFF.

The protein localises to the cell membrane. This is an uncharacterized protein from Mycoplasma genitalium (strain ATCC 33530 / DSM 19775 / NCTC 10195 / G37) (Mycoplasmoides genitalium).